A 326-amino-acid chain; its full sequence is Methionyl-tRNA formyltransferase (326 aa).

Residue 110 to 113 (SLLP) coordinates (6S)-5,6,7,8-tetrahydrofolate. The disordered stretch occupies residues 307-326 (VGTRFSPPEAPQREPAPGEA).

This sequence belongs to the Fmt family.

The catalysed reaction is L-methionyl-tRNA(fMet) + (6R)-10-formyltetrahydrofolate = N-formyl-L-methionyl-tRNA(fMet) + (6S)-5,6,7,8-tetrahydrofolate + H(+). Attaches a formyl group to the free amino group of methionyl-tRNA(fMet). The formyl group appears to play a dual role in the initiator identity of N-formylmethionyl-tRNA by promoting its recognition by IF2 and preventing the misappropriation of this tRNA by the elongation apparatus. The sequence is that of Methionyl-tRNA formyltransferase from Symbiobacterium thermophilum (strain DSM 24528 / JCM 14929 / IAM 14863 / T).